The sequence spans 305 residues: N-acetylneuraminate lyase (305 aa).

Residues threonine 51 and threonine 52 each coordinate aceneuramate. The active-site Proton donor is tyrosine 143. The active-site Schiff-base intermediate with substrate is the lysine 173. 5 residues coordinate aceneuramate: threonine 175, glycine 197, aspartate 199, glutamate 200, and serine 216.

The protein belongs to the DapA family. NanA subfamily. In terms of assembly, homotetramer.

It is found in the cytoplasm. The catalysed reaction is aceneuramate = aldehydo-N-acetyl-D-mannosamine + pyruvate. It participates in amino-sugar metabolism; N-acetylneuraminate degradation. Functionally, catalyzes the cleavage of N-acetylneuraminic acid (sialic acid) to form pyruvate and N-acetylmannosamine via a Schiff base intermediate. It prevents sialic acids from being recycled and returning to the cell surface. Involved in the N-glycolylneuraminic acid (Neu5Gc) degradation pathway. This Xenopus tropicalis (Western clawed frog) protein is N-acetylneuraminate lyase.